The following is a 544-amino-acid chain: Methionine--tRNA ligase (544 aa).

The 'HIGH' region motif lies at 10–20; it reads PYANGSLHLGH. Residues Cys141, Cys144, Cys153, and Cys156 each contribute to the Zn(2+) site. Positions 329–333 match the 'KMSKS' region motif; that stretch reads KLSTS. Thr332 lines the ATP pocket.

This sequence belongs to the class-I aminoacyl-tRNA synthetase family. MetG type 1 subfamily. Monomer. The cofactor is Zn(2+).

It localises to the cytoplasm. It catalyses the reaction tRNA(Met) + L-methionine + ATP = L-methionyl-tRNA(Met) + AMP + diphosphate. Its function is as follows. Is required not only for elongation of protein synthesis but also for the initiation of all mRNA translation through initiator tRNA(fMet) aminoacylation. This chain is Methionine--tRNA ligase, found in Bacillus cereus (strain G9842).